Reading from the N-terminus, the 468-residue chain is 6-phospho-beta-galactosidase (468 aa).

D-galactose 6-phosphate contacts are provided by glutamine 19, histidine 116, asparagine 159, glutamate 160, and asparagine 297. The Proton donor role is filled by glutamate 160. Glutamate 375 functions as the Nucleophile in the catalytic mechanism. Residues serine 428, tryptophan 429, lysine 435, and tyrosine 437 each coordinate D-galactose 6-phosphate.

This sequence belongs to the glycosyl hydrolase 1 family.

The enzyme catalyses a 6-phospho-beta-D-galactoside + H2O = D-galactose 6-phosphate + an alcohol. The protein operates within carbohydrate metabolism; lactose degradation; D-galactose 6-phosphate and beta-D-glucose from lactose 6-phosphate: step 1/1. The sequence is that of 6-phospho-beta-galactosidase from Streptococcus pyogenes serotype M2 (strain MGAS10270).